We begin with the raw amino-acid sequence, 248 residues long: Ubiquinone biosynthesis O-methyltransferase (248 aa).

S-adenosyl-L-methionine is bound by residues Arg-41, Gly-72, Asp-93, and Met-136.

Belongs to the methyltransferase superfamily. UbiG/COQ3 family.

It carries out the reaction a 3-demethylubiquinol + S-adenosyl-L-methionine = a ubiquinol + S-adenosyl-L-homocysteine + H(+). The enzyme catalyses a 3-(all-trans-polyprenyl)benzene-1,2-diol + S-adenosyl-L-methionine = a 2-methoxy-6-(all-trans-polyprenyl)phenol + S-adenosyl-L-homocysteine + H(+). The protein operates within cofactor biosynthesis; ubiquinone biosynthesis. O-methyltransferase that catalyzes the 2 O-methylation steps in the ubiquinone biosynthetic pathway. The protein is Ubiquinone biosynthesis O-methyltransferase of Rhizobium rhizogenes (strain K84 / ATCC BAA-868) (Agrobacterium radiobacter).